We begin with the raw amino-acid sequence, 369 residues long: Probable dual-specificity RNA methyltransferase RlmN (369 aa).

Glu108 serves as the catalytic Proton acceptor. Positions Tyr114–Arg351 constitute a Radical SAM core domain. An intrachain disulfide couples Cys121 to Cys362. Positions 128, 132, and 135 each coordinate [4Fe-4S] cluster. S-adenosyl-L-methionine-binding positions include Gly183–Glu184, Ser217, Ser240–His242, and Asn319. The active-site S-methylcysteine intermediate is the Cys362.

It belongs to the radical SAM superfamily. RlmN family. [4Fe-4S] cluster serves as cofactor.

Its subcellular location is the cytoplasm. It catalyses the reaction adenosine(2503) in 23S rRNA + 2 reduced [2Fe-2S]-[ferredoxin] + 2 S-adenosyl-L-methionine = 2-methyladenosine(2503) in 23S rRNA + 5'-deoxyadenosine + L-methionine + 2 oxidized [2Fe-2S]-[ferredoxin] + S-adenosyl-L-homocysteine. The catalysed reaction is adenosine(37) in tRNA + 2 reduced [2Fe-2S]-[ferredoxin] + 2 S-adenosyl-L-methionine = 2-methyladenosine(37) in tRNA + 5'-deoxyadenosine + L-methionine + 2 oxidized [2Fe-2S]-[ferredoxin] + S-adenosyl-L-homocysteine. Functionally, specifically methylates position 2 of adenine 2503 in 23S rRNA and position 2 of adenine 37 in tRNAs. This is Probable dual-specificity RNA methyltransferase RlmN from Rhodococcus opacus (strain B4).